Consider the following 199-residue polypeptide: Chromophore lyase CpcT/CpeT (199 aa).

Belongs to the CpcT/CpeT biliprotein lyase family.

Covalently attaches a chromophore to Cys residue(s) of phycobiliproteins. This is Chromophore lyase CpcT/CpeT from Prochlorococcus marinus (strain NATL1A).